The sequence spans 297 residues: tRNA dimethylallyltransferase (297 aa).

ATP is bound at residue 15–22; sequence GPTASGKS. A substrate-binding site is contributed by 17–22; that stretch reads TASGKS. Interaction with substrate tRNA regions lie at residues 40 to 43 and 164 to 168; these read DSMQ and QRIVR.

The protein belongs to the IPP transferase family. As to quaternary structure, monomer. It depends on Mg(2+) as a cofactor.

It carries out the reaction adenosine(37) in tRNA + dimethylallyl diphosphate = N(6)-dimethylallyladenosine(37) in tRNA + diphosphate. Its function is as follows. Catalyzes the transfer of a dimethylallyl group onto the adenine at position 37 in tRNAs that read codons beginning with uridine, leading to the formation of N6-(dimethylallyl)adenosine (i(6)A). The polypeptide is tRNA dimethylallyltransferase (Rhizobium leguminosarum bv. trifolii (strain WSM2304)).